A 526-amino-acid chain; its full sequence is Glucose-6-phosphate isomerase (526 aa).

The active-site Proton donor is the glutamate 347. Residues histidine 378 and lysine 493 contribute to the active site.

Belongs to the GPI family.

The protein resides in the cytoplasm. The catalysed reaction is alpha-D-glucose 6-phosphate = beta-D-fructose 6-phosphate. It functions in the pathway carbohydrate biosynthesis; gluconeogenesis. It participates in carbohydrate degradation; glycolysis; D-glyceraldehyde 3-phosphate and glycerone phosphate from D-glucose: step 2/4. In terms of biological role, catalyzes the reversible isomerization of glucose-6-phosphate to fructose-6-phosphate. The polypeptide is Glucose-6-phosphate isomerase (Chlamydia pneumoniae (Chlamydophila pneumoniae)).